We begin with the raw amino-acid sequence, 239 residues long: Small ribosomal subunit protein uS3 (239 aa).

In terms of domain architecture, KH type-2 spans 39–107 (IRAALMKTLK…EVLINIVEVR (69 aa)). Residues 214-239 (AQDKKMAEQDHGGGGGDRRRRDRDAA) are disordered.

The protein belongs to the universal ribosomal protein uS3 family. In terms of assembly, part of the 30S ribosomal subunit. Forms a tight complex with proteins S10 and S14.

In terms of biological role, binds the lower part of the 30S subunit head. Binds mRNA in the 70S ribosome, positioning it for translation. This is Small ribosomal subunit protein uS3 from Methylocella silvestris (strain DSM 15510 / CIP 108128 / LMG 27833 / NCIMB 13906 / BL2).